The chain runs to 279 residues: Pantothenate synthetase (279 aa).

Residue 26–33 (MGGLHEGH) participates in ATP binding. The active-site Proton donor is H33. Q57 serves as a coordination point for (R)-pantoate. Q57 is a beta-alanine binding site. Residue 143–146 (GKKD) coordinates ATP. Residue Q149 coordinates (R)-pantoate. ATP is bound by residues V172 and 180 to 183 (LSSR).

Belongs to the pantothenate synthetase family. In terms of assembly, homodimer.

It is found in the cytoplasm. It catalyses the reaction (R)-pantoate + beta-alanine + ATP = (R)-pantothenate + AMP + diphosphate + H(+). It participates in cofactor biosynthesis; (R)-pantothenate biosynthesis; (R)-pantothenate from (R)-pantoate and beta-alanine: step 1/1. Its function is as follows. Catalyzes the condensation of pantoate with beta-alanine in an ATP-dependent reaction via a pantoyl-adenylate intermediate. This is Pantothenate synthetase from Nitrosospira multiformis (strain ATCC 25196 / NCIMB 11849 / C 71).